The sequence spans 157 residues: Small ribosomal subunit protein uS7 (157 aa).

The protein belongs to the universal ribosomal protein uS7 family. Part of the 30S ribosomal subunit. Contacts proteins S9 and S11.

One of the primary rRNA binding proteins, it binds directly to 16S rRNA where it nucleates assembly of the head domain of the 30S subunit. Is located at the subunit interface close to the decoding center, probably blocks exit of the E-site tRNA. This chain is Small ribosomal subunit protein uS7, found in Caldicellulosiruptor bescii (strain ATCC BAA-1888 / DSM 6725 / KCTC 15123 / Z-1320) (Anaerocellum thermophilum).